A 699-amino-acid chain; its full sequence is Ribosomal RNA large subunit methyltransferase K/L (699 aa).

The THUMP domain occupies 44–155 (DAYKLCLWSR…RDNVILGIDL (112 aa)).

Belongs to the methyltransferase superfamily. RlmKL family.

It localises to the cytoplasm. It catalyses the reaction guanosine(2445) in 23S rRNA + S-adenosyl-L-methionine = N(2)-methylguanosine(2445) in 23S rRNA + S-adenosyl-L-homocysteine + H(+). The catalysed reaction is guanosine(2069) in 23S rRNA + S-adenosyl-L-methionine = N(2)-methylguanosine(2069) in 23S rRNA + S-adenosyl-L-homocysteine + H(+). Functionally, specifically methylates the guanine in position 2445 (m2G2445) and the guanine in position 2069 (m7G2069) of 23S rRNA. This is Ribosomal RNA large subunit methyltransferase K/L from Alteromonas mediterranea (strain DSM 17117 / CIP 110805 / LMG 28347 / Deep ecotype).